Consider the following 275-residue polypeptide: Secreted RxLR effector protein 153 (275 aa).

The N-terminal stretch at 1 to 27 is a signal peptide; it reads MRNRAFLFGLFFIEYACLVLFAAPTRA. The N-linked (GlcNAc...) asparagine glycan is linked to Asn-45. Positions 48-63 match the RxLR-dEER motif; that stretch reads RTLQADDSKRISAEER.

It belongs to the RxLR effector family.

The protein localises to the secreted. Its subcellular location is the host cell membrane. In terms of biological role, secreted effector that completely suppresses the host cell death induced by cell death-inducing proteins. This is Secreted RxLR effector protein 153 from Plasmopara viticola (Downy mildew of grapevine).